Consider the following 530-residue polypeptide: Inactive ubiquitin carboxyl-terminal hydrolase 17-like protein 8 (530 aa).

The USP domain maps to 80–375; it reads AGLQNMGNTC…QAYVLFYIQK (296 aa). Residues 382–392 show a composition bias toward basic and acidic residues; that stretch reads SESVSRGREPR. 2 disordered regions span residues 382–412 and 493–530; these read SESVSRGREPRALGAEDTDRPATQGELKRDH and NSTDQESMNTGTLASLQGRTRRSKGKNKHSKRSLLVCQ. Residues 495–510 are compositionally biased toward polar residues; that stretch reads TDQESMNTGTLASLQG. Residues 511–524 show a composition bias toward basic residues; sequence RTRRSKGKNKHSKR.

This sequence belongs to the peptidase C19 family. USP17 subfamily.

It is found in the nucleus. Its subcellular location is the endoplasmic reticulum. This is Inactive ubiquitin carboxyl-terminal hydrolase 17-like protein 8 (USP17L8) from Homo sapiens (Human).